The following is a 413-amino-acid chain: Argininosuccinate synthase (413 aa).

ATP contacts are provided by residues 12-20 and Ala-39; that span reads AYSGGLDTS. L-citrulline-binding residues include Tyr-92 and Ser-97. Gly-122 is an ATP binding site. L-aspartate contacts are provided by Thr-124, Asn-128, and Asp-129. Residue Asn-128 coordinates L-citrulline. L-citrulline is bound by residues Arg-132, Ser-189, Ser-198, Glu-274, and Tyr-286.

This sequence belongs to the argininosuccinate synthase family. Type 1 subfamily. In terms of assembly, homotetramer.

It localises to the cytoplasm. The catalysed reaction is L-citrulline + L-aspartate + ATP = 2-(N(omega)-L-arginino)succinate + AMP + diphosphate + H(+). It participates in amino-acid biosynthesis; L-arginine biosynthesis; L-arginine from L-ornithine and carbamoyl phosphate: step 2/3. This Aliarcobacter butzleri (strain RM4018) (Arcobacter butzleri) protein is Argininosuccinate synthase.